A 186-amino-acid polypeptide reads, in one-letter code: Two-component response regulator ARR6 (186 aa).

The Response regulatory domain maps to 26-153 (HVLAVDDSHV…DVKRLRDSLM (128 aa)). Aspartate 86 carries the 4-aspartylphosphate modification.

It belongs to the ARR family. Type-A subfamily. Post-translationally, two-component system major event consists of a His-to-Asp phosphorelay between a sensor histidine kinase (HK) and a response regulator (RR). In plants, the His-to-Asp phosphorelay involves an additional intermediate named Histidine-containing phosphotransfer protein (HPt). This multistep phosphorelay consists of a His-Asp-His-Asp sequential transfer of a phosphate group between first a His and an Asp of the HK protein, followed by the transfer to a conserved His of the HPt protein and finally the transfer to an Asp in the receiver domain of the RR protein. Predominantly expressed in roots.

It is found in the nucleus. In terms of biological role, functions as a response regulator involved in His-to-Asp phosphorelay signal transduction system. Phosphorylation of the Asp residue in the receiver domain activates the ability of the protein to promote the transcription of target genes. Type-A response regulators seem to act as negative regulators of the cytokinin signaling. In Arabidopsis thaliana (Mouse-ear cress), this protein is Two-component response regulator ARR6 (ARR6).